The primary structure comprises 587 residues: ATP-dependent lipid A-core flippase (587 aa).

The next 5 membrane-spanning stretches (helical) occupy residues 31 to 51, 68 to 88, 145 to 165, 166 to 186, and 259 to 279; these read LIVSGVALVFNALADSGLIYL, LKMMAFVVVGMIILRGITNFI, GSLITIVREGAYIISLFAVMF, YTSWELTIVLFIIGPIIAVLI, and VQVIASLALATVLYLATTPLI. In terms of domain architecture, ABC transmembrane type-1 spans 32-315; the sequence is IVSGVALVFN…LTAVNAQFQS (284 aa). The 237-residue stretch at 347 to 583 folds into the ABC transporter domain; that stretch reads LEFKNVSFAY…NGAYKQLHSM (237 aa). 381-388 contacts ATP; the sequence is GRSGSGKS.

This sequence belongs to the ABC transporter superfamily. Lipid exporter (TC 3.A.1.106) family. As to quaternary structure, homodimer.

The protein resides in the cell inner membrane. It catalyses the reaction ATP + H2O + lipid A-core oligosaccharideSide 1 = ADP + phosphate + lipid A-core oligosaccharideSide 2.. Its function is as follows. Involved in lipopolysaccharide (LPS) biosynthesis. Translocates lipid A-core from the inner to the outer leaflet of the inner membrane. Transmembrane domains (TMD) form a pore in the inner membrane and the ATP-binding domain (NBD) is responsible for energy generation. The chain is ATP-dependent lipid A-core flippase from Haemophilus influenzae (strain ATCC 51907 / DSM 11121 / KW20 / Rd).